The chain runs to 254 residues: tRNA (guanine-N(1)-)-methyltransferase (254 aa).

Residues G112 and 131 to 136 (IGDYIL) contribute to the S-adenosyl-L-methionine site.

The protein belongs to the RNA methyltransferase TrmD family. Homodimer.

The protein resides in the cytoplasm. The catalysed reaction is guanosine(37) in tRNA + S-adenosyl-L-methionine = N(1)-methylguanosine(37) in tRNA + S-adenosyl-L-homocysteine + H(+). In terms of biological role, specifically methylates guanosine-37 in various tRNAs. The sequence is that of tRNA (guanine-N(1)-)-methyltransferase from Sulfurihydrogenibium sp. (strain YO3AOP1).